A 289-amino-acid chain; its full sequence is UPF0276 protein BPP1075 (289 aa).

Belongs to the UPF0276 family.

The polypeptide is UPF0276 protein BPP1075 (Bordetella parapertussis (strain 12822 / ATCC BAA-587 / NCTC 13253)).